We begin with the raw amino-acid sequence, 1052 residues long: Mediator of RNA polymerase II transcription subunit 5 (1052 aa).

The interval 949–982 is disordered; the sequence is GGDDEQREQHQQQQPDADQSNQGVVAPTGNTPGN. Residues 959–970 show a composition bias toward low complexity; sequence QQQQPDADQSNQ.

It belongs to the Mediator complex subunit 5 family. Component of the Mediator complex.

It localises to the nucleus. Component of the Mediator complex, a coactivator involved in the regulated transcription of nearly all RNA polymerase II-dependent genes. Mediator functions as a bridge to convey information from gene-specific regulatory proteins to the basal RNA polymerase II transcription machinery. Mediator is recruited to promoters by direct interactions with regulatory proteins and serves as a scaffold for the assembly of a functional preinitiation complex with RNA polymerase II and the general transcription factors. In Coccidioides immitis (strain RS) (Valley fever fungus), this protein is Mediator of RNA polymerase II transcription subunit 5 (NUT1).